We begin with the raw amino-acid sequence, 337 residues long: MSRINLLLLCGGGSAEHDISLMSANYFESSLAKSDQFSVLRVELDKLGQYRTAAGDDCELTNNREIRFRDETKAPWPVDYVIPCIHGYPGETGDIQSYFNLIQLPYFGCESEASSNCFNKITAKMWFSALGIPNTPYIFLHQYDDEAISQAQTALANWGSIFIKAASQGSSVGCYKVDDSSKVAQVLKDAFGYAPYVVVEKTIKARELEVAVYEYNGEIVATLPGEIICDTNTFYTFDEKYAKSSKARTDVVAKDVSVELSEQIRAYAIKAFKGMKLRHLSRIDFFLTAENEILLNEINTFPGSTPISMFPKMLQNHGHDFTEYLSLVINSQLSAKD.

Positions 124–330 constitute an ATP-grasp domain; that stretch reads KMWFSALGIP…FTEYLSLVIN (207 aa). Position 154-209 (154-209) interacts with ATP; that stretch reads ALANWGSIFIKAASQGSSVGCYKVDDSSKVAQVLKDAFGYAPYVVVEKTIKARELE. Positions 284, 297, and 299 each coordinate Mg(2+).

This sequence belongs to the D-alanine--D-alanine ligase family. It depends on Mg(2+) as a cofactor. Mn(2+) serves as cofactor.

The protein resides in the cytoplasm. It carries out the reaction 2 D-alanine + ATP = D-alanyl-D-alanine + ADP + phosphate + H(+). The protein operates within cell wall biogenesis; peptidoglycan biosynthesis. Functionally, cell wall formation. The chain is D-alanine--D-alanine ligase from Shewanella putrefaciens (strain CN-32 / ATCC BAA-453).